Reading from the N-terminus, the 670-residue chain is Histone-lysine N-methyltransferase, H3 lysine-9 specific SUVH1 (670 aa).

Residues 53–140 (YPFSSSQANQ…RPISRPENMN (88 aa)) form a disordered region. Positions 68–79 (NQAQYPPQHQQP) are enriched in low complexity. Positions 123–133 (VKRRIPKKRPI) are enriched in basic residues. One can recognise a YDG domain in the interval 211–357 (GIVPGVEIGD…HNTFKYKLVR (147 aa)). The 61-residue stretch at 432-492 (FGCDCANLCK…TCKNKVTQMG (61 aa)) folds into the Pre-SET domain. Zn(2+) contacts are provided by C434, C436, C440, C447, C449, C475, C479, C481, and C484. The SET domain maps to 495–639 (VRLEVFKTAN…PMTELTYDYG (145 aa)). S-adenosyl-L-methionine-binding positions include 505–507 (RGW), D541, Y543, R593, and 596–597 (NH). 4 residues coordinate Zn(2+): C599, C658, C660, and C665. The Post-SET domain occupies 654-670 (GKRKCFCGSAYCRGSFG).

Belongs to the class V-like SAM-binding methyltransferase superfamily. Histone-lysine methyltransferase family. Suvar3-9 subfamily. Expressed in leaves stems and flowers.

It is found in the nucleus. It localises to the chromosome. Its subcellular location is the centromere. It carries out the reaction L-lysyl(9)-[histone H3] + 2 S-adenosyl-L-methionine = N(6),N(6)-dimethyl-L-lysyl(9)-[histone H3] + 2 S-adenosyl-L-homocysteine + 2 H(+). Its function is as follows. Histone methyltransferase. Methylates 'Lys-9' of histone H3. H3 'Lys-9' methylation represents a specific tag for epigenetic transcriptional repression. The sequence is that of Histone-lysine N-methyltransferase, H3 lysine-9 specific SUVH1 (SUVH1) from Arabidopsis thaliana (Mouse-ear cress).